Consider the following 125-residue polypeptide: Protein Turandot F (125 aa).

The first 19 residues, 1–19, serve as a signal peptide directing secretion; that stretch reads MKTVILFGFLLALLGYLEA.

It belongs to the Turandot family.

It is found in the secreted. Its function is as follows. A humoral factor that may play a role in stress tolerance. The chain is Protein Turandot F from Drosophila melanogaster (Fruit fly).